The chain runs to 857 residues: Glucans biosynthesis glucosyltransferase H (857 aa).

6 helical membrane passes run 141 to 158, 197 to 219, 514 to 536, 570 to 592, 605 to 627, and 681 to 703; these read YILL…GWYM, LILF…MGFL, AVFL…LVLS, VALF…ILIW, VTLS…MIFH, and SFLW…SVIS.

Belongs to the glycosyltransferase 2 family. OpgH subfamily.

The protein localises to the cell inner membrane. It participates in glycan metabolism; osmoregulated periplasmic glucan (OPG) biosynthesis. Its function is as follows. Involved in the biosynthesis of osmoregulated periplasmic glucans (OPGs). This is Glucans biosynthesis glucosyltransferase H from Pseudomonas putida (strain ATCC 47054 / DSM 6125 / CFBP 8728 / NCIMB 11950 / KT2440).